Consider the following 543-residue polypeptide: Bifunctional purine biosynthesis protein PurH (543 aa).

One can recognise an MGS-like domain in the interval 5-151 (NHARPIRRAL…KNHKDVTIVV (147 aa)).

The protein belongs to the PurH family.

The enzyme catalyses (6R)-10-formyltetrahydrofolate + 5-amino-1-(5-phospho-beta-D-ribosyl)imidazole-4-carboxamide = 5-formamido-1-(5-phospho-D-ribosyl)imidazole-4-carboxamide + (6S)-5,6,7,8-tetrahydrofolate. The catalysed reaction is IMP + H2O = 5-formamido-1-(5-phospho-D-ribosyl)imidazole-4-carboxamide. It participates in purine metabolism; IMP biosynthesis via de novo pathway; 5-formamido-1-(5-phospho-D-ribosyl)imidazole-4-carboxamide from 5-amino-1-(5-phospho-D-ribosyl)imidazole-4-carboxamide (10-formyl THF route): step 1/1. The protein operates within purine metabolism; IMP biosynthesis via de novo pathway; IMP from 5-formamido-1-(5-phospho-D-ribosyl)imidazole-4-carboxamide: step 1/1. The protein is Bifunctional purine biosynthesis protein PurH of Shewanella oneidensis (strain ATCC 700550 / JCM 31522 / CIP 106686 / LMG 19005 / NCIMB 14063 / MR-1).